Here is a 512-residue protein sequence, read N- to C-terminus: Amidase 2 (512 aa).

Active-site charge relay system residues include K122 and S197. Substrate-binding positions include S197 and I218–S221. The active-site Acyl-ester intermediate is S221.

Belongs to the amidase family.

The catalysed reaction is a monocarboxylic acid amide + H2O = a monocarboxylate + NH4(+). The protein operates within xenobiotic degradation. Its function is as follows. Amidase; part of the Fusarium detoxification of benzoxazolinone cluster 2 (FDB2) involved in the degradation of benzoxazolinones produced by the host plant. Maize, wheat, and rye produce the 2 benzoxazinone phytoanticipins 2,4-dihy-droxy-7-methoxy-1,4-benzoxazin-3-one (DIMBOA) and 2,4-dihydroxy-1,4-benzoxazin-3-one (DIBOA) that, due to their inherent instability once released, spontaneously degrade to the more stable corresponding benzoxazolinones, 6-methoxy-2-benzoxazolinone (MBOA) and 2-benzoxazolinone (BOA), respectively. The first step in the detoxification of benzoxazolinones involves the hydrolysis of the cyclic ester bond of benzoxazolinones by the FDB1 cluster gamma-lactamase MBL1 to aminophenols. MBL1 is able to convert BOA into 2-aminophenol (2-AP), as well as MBOA into 5-methoxy-2-aminophenol (2-AMP). The FDB2 cluster N-malonyltransferase FDB2/NAT1 then metabolizes aminophenols via N-malonylation to non-toxic malonamic acids. FDB2/NAT1 converts 2-AP into N-(2-hydroxyphenyl) malonamic acid (HPMA) and 2-AMP into N-(2-hydroxy-4-methoxyphenyl) malonamic acid (HMPMA). The duplicated dienlactone hydrolases DLH1 and DLH2 may provide redundant function for hydrolyzing the lactone moiety in the BOA molecule. The roles of the amidases an other enzymes encoded by the 2 FDB clusters have not been identified so far. The sequence is that of Amidase 2 from Gibberella moniliformis (strain M3125 / FGSC 7600) (Maize ear and stalk rot fungus).